The primary structure comprises 231 residues: MNRYVSVLALSGIAVLAGCVAPTPKPNDPYYAPVLPRTPLPAAANNGSIYQAGFEQNLYSDRKAFRVGDIITITLNEKTQASKNANSQVGKTSKTGIGLTSLFGAVPNTNNPLGDGDLSLSAGYSGDRATNGKSSAGQGNSLTGSITVTVADVLPNGIIAVRGEKWMTLNTGDELVRIAGMVRADDISTDNTVPSTRIADARITYSGTGSFADASQPGWFDRFFLSPLFPF.

The signal sequence occupies residues 1–18 (MNRYVSVLALSGIAVLAG). Residue C19 is the site of N-palmitoyl cysteine attachment. C19 carries the S-diacylglycerol cysteine lipid modification.

This sequence belongs to the FlgH family. The basal body constitutes a major portion of the flagellar organelle and consists of four rings (L,P,S, and M) mounted on a central rod.

The protein localises to the cell outer membrane. The protein resides in the bacterial flagellum basal body. In terms of biological role, assembles around the rod to form the L-ring and probably protects the motor/basal body from shearing forces during rotation. The polypeptide is Flagellar L-ring protein (Pseudomonas fluorescens (strain SBW25)).